The chain runs to 156 residues: MNINATLLGQAISFALFVWFCMKYVWPPLMQAIEERQKKIADGLQAAERAAKDLDLAQANASDQLKEAKRTATEIIEQANKRKSQIIDEAREEAQAERQKILAQAEAELEAERNRARDELRKQVATLAVAGAEKILERTIDKDAQKDILDNITAKL.

Residues 7–29 (LLGQAISFALFVWFCMKYVWPPL) traverse the membrane as a helical segment.

This sequence belongs to the ATPase B chain family. As to quaternary structure, F-type ATPases have 2 components, F(1) - the catalytic core - and F(0) - the membrane proton channel. F(1) has five subunits: alpha(3), beta(3), gamma(1), delta(1), epsilon(1). F(0) has three main subunits: a(1), b(2) and c(10-14). The alpha and beta chains form an alternating ring which encloses part of the gamma chain. F(1) is attached to F(0) by a central stalk formed by the gamma and epsilon chains, while a peripheral stalk is formed by the delta and b chains.

It is found in the cell inner membrane. Its function is as follows. F(1)F(0) ATP synthase produces ATP from ADP in the presence of a proton or sodium gradient. F-type ATPases consist of two structural domains, F(1) containing the extramembraneous catalytic core and F(0) containing the membrane proton channel, linked together by a central stalk and a peripheral stalk. During catalysis, ATP synthesis in the catalytic domain of F(1) is coupled via a rotary mechanism of the central stalk subunits to proton translocation. Functionally, component of the F(0) channel, it forms part of the peripheral stalk, linking F(1) to F(0). This is ATP synthase subunit b from Vibrio parahaemolyticus serotype O3:K6 (strain RIMD 2210633).